Here is a 229-residue protein sequence, read N- to C-terminus: Leucyl/phenylalanyl-tRNA--protein transferase (229 aa).

This sequence belongs to the L/F-transferase family.

The protein resides in the cytoplasm. It catalyses the reaction N-terminal L-lysyl-[protein] + L-leucyl-tRNA(Leu) = N-terminal L-leucyl-L-lysyl-[protein] + tRNA(Leu) + H(+). It carries out the reaction N-terminal L-arginyl-[protein] + L-leucyl-tRNA(Leu) = N-terminal L-leucyl-L-arginyl-[protein] + tRNA(Leu) + H(+). The catalysed reaction is L-phenylalanyl-tRNA(Phe) + an N-terminal L-alpha-aminoacyl-[protein] = an N-terminal L-phenylalanyl-L-alpha-aminoacyl-[protein] + tRNA(Phe). Functions in the N-end rule pathway of protein degradation where it conjugates Leu, Phe and, less efficiently, Met from aminoacyl-tRNAs to the N-termini of proteins containing an N-terminal arginine or lysine. This Desulforapulum autotrophicum (strain ATCC 43914 / DSM 3382 / VKM B-1955 / HRM2) (Desulfobacterium autotrophicum) protein is Leucyl/phenylalanyl-tRNA--protein transferase.